A 471-amino-acid chain; its full sequence is Alpha-galactosidase 2 (471 aa).

The first 18 residues, 1-18 (MFAFYFLTACISLKGVFG), serve as a signal peptide directing secretion. The cysteines at positions 42 and 74 are disulfide-linked. Residues aspartate 72 and aspartate 73 each contribute to the substrate site. The N-linked (GlcNAc...) asparagine glycan is linked to asparagine 105. An intrachain disulfide couples cysteine 121 to cysteine 151. Residue lysine 147 coordinates substrate. Aspartate 149 functions as the Nucleophile in the catalytic mechanism. Asparagine 175 carries an N-linked (GlcNAc...) asparagine glycan. Position 205 (arginine 205) interacts with substrate. The active-site Proton donor is aspartate 209. 2 cysteine pairs are disulfide-bonded: cysteine 221–cysteine 237 and cysteine 223–cysteine 230. Glutamine 251 lines the substrate pocket. 7 N-linked (GlcNAc...) asparagine glycosylation sites follow: asparagine 270, asparagine 370, asparagine 403, asparagine 413, asparagine 422, asparagine 435, and asparagine 454.

The protein belongs to the glycosyl hydrolase 27 family. As to quaternary structure, homotetramer.

The protein localises to the secreted. The catalysed reaction is Hydrolysis of terminal, non-reducing alpha-D-galactose residues in alpha-D-galactosides, including galactose oligosaccharides, galactomannans and galactolipids.. The polypeptide is Alpha-galactosidase 2 (MEL2) (Saccharomyces cerevisiae (Baker's yeast)).